We begin with the raw amino-acid sequence, 541 residues long: ATP synthase subunit beta (541 aa).

The tract at residues 1-65 (MAKAVTSSKG…TPVKKEERAK (65 aa)) is disordered. Composition is skewed to basic and acidic residues over residues 25–36 (VKKDASKSKDAS) and 52–65 (AAKD…ERAK). 214-221 (GGAGVGKT) is a binding site for ATP.

It belongs to the ATPase alpha/beta chains family. In terms of assembly, F-type ATPases have 2 components, CF(1) - the catalytic core - and CF(0) - the membrane proton channel. CF(1) has five subunits: alpha(3), beta(3), gamma(1), delta(1), epsilon(1). CF(0) has three main subunits: a(1), b(2) and c(9-12). The alpha and beta chains form an alternating ring which encloses part of the gamma chain. CF(1) is attached to CF(0) by a central stalk formed by the gamma and epsilon chains, while a peripheral stalk is formed by the delta and b chains.

It is found in the cell inner membrane. It catalyses the reaction ATP + H2O + 4 H(+)(in) = ADP + phosphate + 5 H(+)(out). Its function is as follows. Produces ATP from ADP in the presence of a proton gradient across the membrane. The catalytic sites are hosted primarily by the beta subunits. The protein is ATP synthase subunit beta of Bartonella tribocorum (strain CIP 105476 / IBS 506).